Here is a 353-residue protein sequence, read N- to C-terminus: MTEKGLTYADAGVNRERHYELVRRIAAHTARTLRRPGTLGNIGAFGGLFQLDPARYPEPVLVSGTDGVGTKLRLAFLSGRHDTVGIDLVAMSVNDILCQGAEPLFFLDYIGIGQKDLAVLEQVVKGIADGCLQAGCALIGGETAELPGMYPPGEYDLAGFAVGIVNRDRLLTGEKVAPGDALVGLASSGLHANGYSLARRVLLKVDGGAFDLDDRPPELGGRTVLEVMLTPTRIYVRTVLRLLARFDVHGIANITGGGLHENIPRMLPEGTAAVLRRGAWKEPPVFDLIRRLGPVAQAEMEATFNLGLGMVLAVPADQAEAVAAAARELGEEAWVVGEVAAAEPGGPRVVVRR.

It belongs to the AIR synthase family.

Its subcellular location is the cytoplasm. The enzyme catalyses 2-formamido-N(1)-(5-O-phospho-beta-D-ribosyl)acetamidine + ATP = 5-amino-1-(5-phospho-beta-D-ribosyl)imidazole + ADP + phosphate + H(+). It functions in the pathway purine metabolism; IMP biosynthesis via de novo pathway; 5-amino-1-(5-phospho-D-ribosyl)imidazole from N(2)-formyl-N(1)-(5-phospho-D-ribosyl)glycinamide: step 2/2. This is Phosphoribosylformylglycinamidine cyclo-ligase from Symbiobacterium thermophilum (strain DSM 24528 / JCM 14929 / IAM 14863 / T).